The primary structure comprises 231 residues: ATP phosphoribosyltransferase (231 aa).

This sequence belongs to the ATP phosphoribosyltransferase family. Short subfamily. In terms of assembly, heteromultimer composed of HisG and HisZ subunits.

It is found in the cytoplasm. The catalysed reaction is 1-(5-phospho-beta-D-ribosyl)-ATP + diphosphate = 5-phospho-alpha-D-ribose 1-diphosphate + ATP. It participates in amino-acid biosynthesis; L-histidine biosynthesis; L-histidine from 5-phospho-alpha-D-ribose 1-diphosphate: step 1/9. In terms of biological role, catalyzes the condensation of ATP and 5-phosphoribose 1-diphosphate to form N'-(5'-phosphoribosyl)-ATP (PR-ATP). Has a crucial role in the pathway because the rate of histidine biosynthesis seems to be controlled primarily by regulation of HisG enzymatic activity. The protein is ATP phosphoribosyltransferase (hisG) of Rhizobium etli (strain CIAT 652).